A 577-amino-acid chain; its full sequence is Arginine--tRNA ligase (577 aa).

The 'HIGH' region motif lies at P122–H132.

Belongs to the class-I aminoacyl-tRNA synthetase family. In terms of assembly, monomer.

It is found in the cytoplasm. It catalyses the reaction tRNA(Arg) + L-arginine + ATP = L-arginyl-tRNA(Arg) + AMP + diphosphate. This Salmonella paratyphi B (strain ATCC BAA-1250 / SPB7) protein is Arginine--tRNA ligase.